A 152-amino-acid chain; its full sequence is MLMNSVIALTFLTASSNNGGLNIDVQQEEEKRINNDLNQYDTTLFNKDSKAVNDAIAKQKKERQQQIKNDMFQNQASHSTRLNETKKVLFSKSNLEKTSESDKSPYIQNKQEKKIFPYILMSVGAFLTLGFVIFSIHKGRRTKNESARKSNI.

Topologically, residues 1 to 114 (MLMNSVIALT…PYIQNKQEKK (114 aa)) are cytoplasmic. The tract at residues 62-83 (ERQQQIKNDMFQNQASHSTRLN) is disordered. The segment covering 66-80 (QIKNDMFQNQASHST) has biased composition (polar residues). A helical membrane pass occupies residues 115-135 (IFPYILMSVGAFLTLGFVIFS). Topologically, residues 136-152 (IHKGRRTKNESARKSNI) are extracellular.

It belongs to the EssA family.

It localises to the cell membrane. In terms of biological role, component of the ESAT-6 secretion system (Ess). Required for the secretion of EsxA and EsxB. This Staphylococcus aureus (strain COL) protein is ESAT-6 secretion machinery protein EssA.